Here is a 215-residue protein sequence, read N- to C-terminus: Glutathione S-transferase D6 (215 aa).

The GST N-terminal domain occupies 1–80 (MDLYNMSGSP…YLVEQYGKDD (80 aa)). Glutathione is bound by residues serine 9, 50-52 (HTI), and 64-66 (ETR). In terms of domain architecture, GST C-terminal spans 86-206 (DPQKQALINQ…LARIQSAKKF (121 aa)).

Belongs to the GST superfamily. Delta family. Homodimer.

It catalyses the reaction RX + glutathione = an S-substituted glutathione + a halide anion + H(+). Functionally, conjugation of reduced glutathione to a wide number of exogenous and endogenous hydrophobic electrophiles. May be involved in detoxification. The polypeptide is Glutathione S-transferase D6 (Drosophila melanogaster (Fruit fly)).